We begin with the raw amino-acid sequence, 68 residues long: Intracellular calcium channel modulator CCP-Ts (68 aa).

Positions M1 to A23 are cleaved as a signal peptide. 3 disulfides stabilise this stretch: C33–C47, C40–C53, and C46–C62.

The protein belongs to the scorpion calcin-like family. Expressed by the venom gland. In intravenously injected mice, the labeled toxin has preference for heart, liver and lungs.

Its subcellular location is the secreted. The protein localises to the nucleus. Its function is as follows. Cell penetrating peptide (CPP) that increases intracellular calcium release through the activation of nuclear inositol 1,4,5-trisphosphate receptors (ITPR) of cardiomyocytes, thereby causing an increase in the contraction frequency of these cells. In vivo, this toxin is not lethal to mice, hovewer anti-CPP serum reduces venom lethality, suggesting that this toxin is lethal when it acts in synergy with other venom components. The protein is Intracellular calcium channel modulator CCP-Ts of Tityus serrulatus (Brazilian scorpion).